We begin with the raw amino-acid sequence, 273 residues long: ATP synthase subunit a (273 aa).

A run of 5 helical transmembrane segments spans residues 42 to 62, 102 to 122, 148 to 168, 213 to 233, and 244 to 264; these read TLNIDSLFFSVVLGALFLFIF, VIAPLALTVFVWVFLMNMMDL, DVSITLSMALGVFILILFYSI, LFGNMYAGELIFILIAGLLPW, and AIFHILIITLQAFIFMVLTIV.

This sequence belongs to the ATPase A chain family. In terms of assembly, F-type ATPases have 2 components, CF(1) - the catalytic core - and CF(0) - the membrane proton channel. CF(1) has five subunits: alpha(3), beta(3), gamma(1), delta(1), epsilon(1). CF(0) has three main subunits: a(1), b(2) and c(9-12). The alpha and beta chains form an alternating ring which encloses part of the gamma chain. CF(1) is attached to CF(0) by a central stalk formed by the gamma and epsilon chains, while a peripheral stalk is formed by the delta and b chains.

The protein resides in the cell inner membrane. Functionally, key component of the proton channel; it plays a direct role in the translocation of protons across the membrane. This Serratia proteamaculans (strain 568) protein is ATP synthase subunit a.